An 803-amino-acid chain; its full sequence is Protein AMEIOTIC 1 homolog (803 aa).

Disordered regions lie at residues 21–64 (RPQV…QSLS) and 264–333 (RLRQ…RWSA). Positions 39 to 50 (NGKDDANHDESK) are enriched in basic and acidic residues. The segment covering 51–64 (NQSPGLPLSRQSLS) has biased composition (polar residues). A compositionally biased stretch (basic and acidic residues) spans 283–295 (KREEAESSMDKSR). Over residues 296–313 (AARKKKAKTYKSPKKVEK) the composition is skewed to basic residues. The segment covering 314-333 (RRVVEAKDGDPRRGKDRWSA) has biased composition (basic and acidic residues). The stretch at 450–567 (VKKKVEELAE…SSFLSLKEQL (118 aa)) forms a coiled coil. A disordered region spans residues 651–688 (ISGGGSSSCPVASGPEQLPRSSSCPSIGPGGLPPSSRA).

The protein resides in the nucleus. It is found in the chromosome. Functionally, plays a fundamental role in building the proper chromosome structure at the beginning of meiosis in male meiocytes. Required for the transition from leptotene to zygotene in meiocytes. Required for homologous chromosome pairing. The protein is Protein AMEIOTIC 1 homolog of Oryza sativa subsp. japonica (Rice).